Here is a 274-residue protein sequence, read N- to C-terminus: Large ribosomal subunit protein uL2 (274 aa).

Disordered regions lie at residues 28-54 (KPYAPLLEKSSKTGGRNNNGRITTRHI) and 221-274 (RGTA…RTKK). The segment covering 39–49 (KTGGRNNNGRI) has biased composition (polar residues).

Belongs to the universal ribosomal protein uL2 family. As to quaternary structure, part of the 50S ribosomal subunit. Forms a bridge to the 30S subunit in the 70S ribosome.

One of the primary rRNA binding proteins. Required for association of the 30S and 50S subunits to form the 70S ribosome, for tRNA binding and peptide bond formation. It has been suggested to have peptidyltransferase activity; this is somewhat controversial. Makes several contacts with the 16S rRNA in the 70S ribosome. This Photorhabdus laumondii subsp. laumondii (strain DSM 15139 / CIP 105565 / TT01) (Photorhabdus luminescens subsp. laumondii) protein is Large ribosomal subunit protein uL2.